A 1125-amino-acid chain; its full sequence is Protein efr-3 (1125 aa).

4 disordered regions span residues 240-261 (RTSN…PNPI), 471-493 (RPSR…NGAA), 788-819 (TSPP…KDET), and 845-1093 (QAGS…LGEK). Residues 242 to 252 (SNATAQPSETT) are compositionally biased toward polar residues. Positions 788-798 (TSPPTSPTTSP) are enriched in low complexity. A compositionally biased stretch (polar residues) spans 845–854 (QAGSSQTASL). A compositionally biased stretch (low complexity) spans 855–877 (NGTNGTHRNTVNNNNRLGVNGVT). Polar residues-rich tracts occupy residues 878–896 (SPNG…TGPN), 975–1011 (LSFN…TQQL), and 1046–1071 (SRTT…TSSK).

This sequence belongs to the EFR3 family.

This is Protein efr-3 (efr-3) from Neurospora crassa (strain ATCC 24698 / 74-OR23-1A / CBS 708.71 / DSM 1257 / FGSC 987).